A 304-amino-acid polypeptide reads, in one-letter code: Acetyl-coenzyme A carboxylase carboxyl transferase subunit beta (304 aa).

The 270-residue stretch at 23 to 292 (VWTKCDSCGQ…PNPEAPREGV (270 aa)) folds into the CoA carboxyltransferase N-terminal domain. Residues cysteine 27, cysteine 30, cysteine 46, and cysteine 49 each coordinate Zn(2+). The C4-type zinc-finger motif lies at 27 to 49 (CDSCGQVLYRAELERNLEVCPKC). A disordered region spans residues 285–304 (PEAPREGVVVPPVPDQEPEA). A compositionally biased stretch (pro residues) spans 295-304 (PPVPDQEPEA).

This sequence belongs to the AccD/PCCB family. In terms of assembly, acetyl-CoA carboxylase is a heterohexamer composed of biotin carboxyl carrier protein (AccB), biotin carboxylase (AccC) and two subunits each of ACCase subunit alpha (AccA) and ACCase subunit beta (AccD). The cofactor is Zn(2+).

It is found in the cytoplasm. The catalysed reaction is N(6)-carboxybiotinyl-L-lysyl-[protein] + acetyl-CoA = N(6)-biotinyl-L-lysyl-[protein] + malonyl-CoA. Its pathway is lipid metabolism; malonyl-CoA biosynthesis; malonyl-CoA from acetyl-CoA: step 1/1. Component of the acetyl coenzyme A carboxylase (ACC) complex. Biotin carboxylase (BC) catalyzes the carboxylation of biotin on its carrier protein (BCCP) and then the CO(2) group is transferred by the transcarboxylase to acetyl-CoA to form malonyl-CoA. The chain is Acetyl-coenzyme A carboxylase carboxyl transferase subunit beta from Escherichia coli O6:H1 (strain CFT073 / ATCC 700928 / UPEC).